Consider the following 296-residue polypeptide: Probable endonuclease 4 (296 aa).

The Zn(2+) site is built by histidine 68, histidine 109, glutamate 144, aspartate 178, histidine 181, histidine 213, aspartate 226, histidine 228, and glutamate 258.

The protein belongs to the AP endonuclease 2 family. Zn(2+) serves as cofactor.

It catalyses the reaction Endonucleolytic cleavage to 5'-phosphooligonucleotide end-products.. In terms of biological role, endonuclease IV plays a role in DNA repair. It cleaves phosphodiester bonds at apurinic or apyrimidinic (AP) sites, generating a 3'-hydroxyl group and a 5'-terminal sugar phosphate. In Staphylococcus aureus (strain NCTC 8325 / PS 47), this protein is Probable endonuclease 4.